The primary structure comprises 294 residues: Glycine--tRNA ligase alpha subunit (294 aa).

The protein belongs to the class-II aminoacyl-tRNA synthetase family. Tetramer of two alpha and two beta subunits.

The protein resides in the cytoplasm. The catalysed reaction is tRNA(Gly) + glycine + ATP = glycyl-tRNA(Gly) + AMP + diphosphate. The protein is Glycine--tRNA ligase alpha subunit of Sulfurovum sp. (strain NBC37-1).